The following is a 65-amino-acid chain: Large ribosomal subunit protein bL35 (65 aa).

A disordered region spans residues 1 to 26 (MPKIKTVRGAAKRFKKTASGGFKRKQ). The span at 10-26 (AAKRFKKTASGGFKRKQ) shows a compositional bias: basic residues.

Belongs to the bacterial ribosomal protein bL35 family.

In Actinobacillus pleuropneumoniae serotype 7 (strain AP76), this protein is Large ribosomal subunit protein bL35.